The following is a 66-amino-acid chain: Large ribosomal subunit protein bL33c (66 aa).

It belongs to the bacterial ribosomal protein bL33 family.

It localises to the plastid. Its subcellular location is the chloroplast. This Dioscorea elephantipes (Elephant's foot yam) protein is Large ribosomal subunit protein bL33c.